The chain runs to 416 residues: MFQDVLVITVAAGRGGDGAVSFRREKFVPKGGPDGGDGGRGGSVYLRARGSVDSLSRLSKRTYKAEDGEHGRGSQQHGRGGEDLVIEVPRGTRVFDADTGELLADLTEEGQTVLVARGGAGGRGNMHFVTPTRQAPRFAEAGEEGEKRRLRLELMLIADVGLVGYPNAGKSSLLAAMTRAHPKIAPYPFTTLSPNLGVVEVSEEERFTLADIPGIIEGASEGKGLGLEFLRHIARTRVLLYVLDAADEPLKTLETLRKEVGAYDPALLRRPSLVALNKVDLLEEEAVKALADALAREGLAVLPVSALTGVGLPALKEALHALVRSTPPPEMPKPVPRKEVQAGVEVVPVAEGVYEVRAPEVERYLARIKGDLMEAAGYLQEVFRRQGVEAALRAKGVRAGDLVRIGGLEFEYIPEV.

In terms of domain architecture, Obg spans 1 to 157; the sequence is MFQDVLVITV…RRLRLELMLI (157 aa). Disordered stretches follow at residues 25 to 44 and 62 to 82; these read EKFV…GGSV and TYKA…RGGE. Residues 32–42 are compositionally biased toward gly residues; it reads GPDGGDGGRGG. Basic and acidic residues predominate over residues 63-72; the sequence is YKAEDGEHGR. Residues 158–324 form the OBG-type G domain; it reads ADVGLVGYPN…LKEALHALVR (167 aa). GTP-binding positions include 164-171, 189-193, 211-214, 277-280, and 305-307; these read GYPNAGKS, FTTLS, DIPG, NKVD, and SAL. Residues Ser-171 and Thr-191 each contribute to the Mg(2+) site. Positions 336-414 constitute an OCT domain; the sequence is PRKEVQAGVE…IGGLEFEYIP (79 aa).

Belongs to the TRAFAC class OBG-HflX-like GTPase superfamily. OBG GTPase family. In terms of assembly, monomer. Requires Mg(2+) as cofactor.

It localises to the cytoplasm. Its function is as follows. An essential GTPase which binds GTP, GDP and possibly (p)ppGpp with moderate affinity, with high nucleotide exchange rates and a fairly low GTP hydrolysis rate. Plays a role in control of the cell cycle, stress response, ribosome biogenesis and in those bacteria that undergo differentiation, in morphogenesis control. This is GTPase Obg from Thermus thermophilus (strain ATCC BAA-163 / DSM 7039 / HB27).